Consider the following 458-residue polypeptide: Phosphoglucosamine mutase (458 aa).

Serine 106 (phosphoserine intermediate) is an active-site residue. Positions 106, 247, 249, and 251 each coordinate Mg(2+). Serine 106 is modified (phosphoserine).

It belongs to the phosphohexose mutase family. Requires Mg(2+) as cofactor. Activated by phosphorylation.

The enzyme catalyses alpha-D-glucosamine 1-phosphate = D-glucosamine 6-phosphate. Functionally, catalyzes the conversion of glucosamine-6-phosphate to glucosamine-1-phosphate. This is Phosphoglucosamine mutase from Chlamydia trachomatis serovar D (strain ATCC VR-885 / DSM 19411 / UW-3/Cx).